The following is a 614-amino-acid chain: Vitamin B12 transporter BtuB (614 aa).

The N-terminal stretch at 1 to 20 (MIKKATLLTAFSVTAFSAWA) is a signal peptide. The TonB box motif lies at 26 to 33 (DTLVVTAN). The TBDR plug domain occupies 38-152 (PRSAVLAPVT…IGGVVNIITT (115 aa)). Cyanocob(III)alamin contacts are provided by residues Ser-85, Asn-92, and 110–111 (VS). One can recognise a TBDR beta-barrel domain in the interval 155-614 (NPGTELTAGW…EYTLSGSYTF (460 aa)). 3 beta stranded membrane passes run 158-165 (TELTAGWG), 169-178 (YQNYDISTQQ), and 184-195 (TRATLIGDYEYT). 4 residues coordinate Ca(2+): Asp-199, Gln-211, Asp-213, and Asp-215. 2 beta stranded membrane-spanning segments follow: residues 217 to 227 (FLSKTLYGALE) and 232 to 248 (DRWS…NRTD). Ca(2+) is bound by residues Tyr-249 and Asp-250. Position 251 (Ala-251) interacts with cyanocob(III)alamin. Ca(2+) is bound at residue Asp-261. The next 14 beta stranded transmembrane spans lie at 263–277 (RKLY…LHFN), 279–296 (ERIQ…KDYN), 309–325 (TLDE…NSVV), 328–337 (HGNVGAGVDW), 353–369 (YDQR…QQLG), 371–381 (FTLEAAARSDD), 385–400 (FGRH…WEFI), 403–417 (YRFI…KAPN), 434–443 (KSKQWEGAFE), 449–458 (VSWRISGYRN), 473–490 (YYNE…TANF), 494–509 (PLTH…ARNA), 517–529 (RRSK…QLDW), and 535–550 (DWGM…YDSD). Thr-309 is a binding site for cyanocob(III)alamin. Arg-517 lines the cyanocob(III)alamin pocket. Tyr-551 lines the cyanocob(III)alamin pocket. 3 beta stranded membrane-spanning segments follow: residues 558–572 (TVKM…LTVA), 585–596 (IANLFDKDYETV), and 602–614 (AGRE…SYTF). The TonB C-terminal box signature appears at 597–614 (YGYQTAGREYTLSGSYTF).

The protein belongs to the TonB-dependent receptor family. BtuB (TC 1.B.14.3.1) subfamily.

The protein resides in the cell outer membrane. In terms of biological role, involved in the active translocation of vitamin B12 (cyanocobalamin) across the outer membrane to the periplasmic space. It derives its energy for transport by interacting with the trans-periplasmic membrane protein TonB. The protein is Vitamin B12 transporter BtuB of Salmonella typhimurium (strain LT2 / SGSC1412 / ATCC 700720).